The following is an 81-amino-acid chain: RNA-binding protein Hfq (81 aa).

One can recognise a Sm domain in the interval 11–71 (DIFLNNARKN…ISTITPTKPI (61 aa)).

It belongs to the Hfq family. In terms of assembly, homohexamer.

RNA chaperone that binds small regulatory RNA (sRNAs) and mRNAs to facilitate mRNA translational regulation in response to envelope stress, environmental stress and changes in metabolite concentrations. Also binds with high specificity to tRNAs. This Clostridium beijerinckii (strain ATCC 51743 / NCIMB 8052) (Clostridium acetobutylicum) protein is RNA-binding protein Hfq.